We begin with the raw amino-acid sequence, 478 residues long: RNA pseudouridine synthase 3, mitochondrial (478 aa).

The transit peptide at 1–20 directs the protein to the mitochondrion; that stretch reads MWKAKTCFRQIYLTVLIRRY. In terms of domain architecture, S4 RNA-binding spans 92-162; it reads EEIYDKAIQT…MRISKRYDTI (71 aa). Asp232 is an active-site residue.

It belongs to the pseudouridine synthase RluA family.

It is found in the mitochondrion. It carries out the reaction a uridine in RNA = a pseudouridine in RNA. This Arabidopsis thaliana (Mouse-ear cress) protein is RNA pseudouridine synthase 3, mitochondrial.